Here is a 69-residue protein sequence, read N- to C-terminus: Sec-independent protein translocase protein TatA (69 aa).

The helical transmembrane segment at 1 to 21 (MFGLGGQELVLILLIVLLLFG) threads the bilayer. Positions 47 to 63 (EEEFNKSMDDNPKKEKA) are enriched in basic and acidic residues. Positions 47-69 (EEEFNKSMDDNPKKEKATTASKS) are disordered.

Belongs to the TatA/E family. Forms a complex with TatC.

The protein resides in the cell inner membrane. Functionally, part of the twin-arginine translocation (Tat) system that transports large folded proteins containing a characteristic twin-arginine motif in their signal peptide across membranes. TatA could form the protein-conducting channel of the Tat system. The sequence is that of Sec-independent protein translocase protein TatA from Chlorobium chlorochromatii (strain CaD3).